Consider the following 236-residue polypeptide: 7-cyano-7-deazaguanine synthase (236 aa).

Residue 7 to 17 (CSGGLDSVSLA) coordinates ATP. Residues Cys185, Cys193, Cys196, and Cys199 each contribute to the Zn(2+) site.

The protein belongs to the QueC family. The cofactor is Zn(2+).

It carries out the reaction 7-carboxy-7-deazaguanine + NH4(+) + ATP = 7-cyano-7-deazaguanine + ADP + phosphate + H2O + H(+). It functions in the pathway purine metabolism; 7-cyano-7-deazaguanine biosynthesis. In terms of biological role, catalyzes the ATP-dependent conversion of 7-carboxy-7-deazaguanine (CDG) to 7-cyano-7-deazaguanine (preQ(0)). The sequence is that of 7-cyano-7-deazaguanine synthase from Agrobacterium fabrum (strain C58 / ATCC 33970) (Agrobacterium tumefaciens (strain C58)).